A 260-amino-acid chain; its full sequence is Large ribosomal subunit protein uL30 (260 aa).

The residue at position 1 (M1) is an N-acetylmethionine. Repeat copies occupy residues 7–18, 19–30, 31–42, 43–54, and 55–66. Positions 7–66 are 5 X 12 AA tandem repeats; it reads KKKKVAAALGTLKKKKVPAVPETLKKKRRNFAELKVKRLRKKFALKTLRKARRKLIYEKA. T29 bears the Phosphothreonine mark. K136 carries the post-translational modification N6-acetyllysine. Residue K139 is modified to N6-succinyllysine. Y151 bears the Phosphotyrosine mark.

This sequence belongs to the universal ribosomal protein uL30 family. As to quaternary structure, component of the large ribosomal subunit. Homodimer. Interacts with DHX33.

Its subcellular location is the cytoplasm. In terms of biological role, component of the large ribosomal subunit. The ribosome is a large ribonucleoprotein complex responsible for the synthesis of proteins in the cell. Binds to G-rich structures in 28S rRNA and in mRNAs. Plays a regulatory role in the translation apparatus; inhibits cell-free translation of mRNAs. This is Large ribosomal subunit protein uL30 (Rpl7) from Rattus norvegicus (Rat).